An 81-amino-acid polypeptide reads, in one-letter code: Sulfur carrier protein TusA (81 aa).

Cysteine 19 serves as the catalytic Cysteine persulfide intermediate.

The protein belongs to the sulfur carrier protein TusA family. In terms of assembly, interacts with IscS.

It is found in the cytoplasm. Its pathway is tRNA modification. Sulfur carrier protein involved in sulfur trafficking in the cell. Part of a sulfur-relay system required for 2-thiolation during synthesis of 2-thiouridine of the modified wobble base 5-methylaminomethyl-2-thiouridine (mnm(5)s(2)U) in tRNA. Interacts with IscS and stimulates its cysteine desulfurase activity. Accepts an activated sulfur from IscS, which is then transferred to TusD, and thus determines the direction of sulfur flow from IscS to 2-thiouridine formation. Also appears to be involved in sulfur transfer for the biosynthesis of molybdopterin. The polypeptide is Sulfur carrier protein TusA (Escherichia fergusonii (strain ATCC 35469 / DSM 13698 / CCUG 18766 / IAM 14443 / JCM 21226 / LMG 7866 / NBRC 102419 / NCTC 12128 / CDC 0568-73)).